We begin with the raw amino-acid sequence, 434 residues long: Nuclear envelope integral membrane protein 1b (434 aa).

Positions 1–29 (MAGEVEGRGCGFSLGVLVTLLVLPLPSLC) are cleaved as a signal peptide. 5 helical membrane-spanning segments follow: residues 151–171 (PRLF…DTLS), 175–195 (LFFY…ILVF), 206–226 (PFFA…QLVF), 239–259 (YLIV…YIYG), and 280–300 (LLMY…VIAF). Positions 176-287 (FFYSTGITVG…GLLLMYVSVQ (112 aa)) are a; required for its colocalization with lamins at the nuclear envelope. Positions 317-325 (RKIKLKRAK) match the Nuclear localization signal motif. Positions 326 to 395 (PGPPRLLTEE…LTPNEVSVHE (70 aa)) are b; interaction with ran. Positions 326 to 434 (PGPPRLLTEE…PLYPIPRSVF (109 aa)) are interaction with banf1-a and banf1-b. Residues 368-375 (SRIQSPKR) are BAF-binding site (BBS); essential for interaction with banf1-a, banf1-b and ran.

It belongs to the NEMP family. As to quaternary structure, interacts with banf1-a and banf1-b. Interacts with ran-gtp. Post-translationally, phosphorylated.

It is found in the nucleus inner membrane. The protein localises to the nucleus envelope. In terms of biological role, in concert with ran, required for proper eye development. May be involved in the expression of early eye marker genes. Contributes to nuclear envelope stiffness in germ cells. Required for fertility. Essential for normal erythropoiesis. Required for efficient nuclear envelope opening and enucleation during the late stages of erythroblast maturation. The chain is Nuclear envelope integral membrane protein 1b (nemp1b) from Xenopus laevis (African clawed frog).